The following is a 337-amino-acid chain: Glyceraldehyde-3-phosphate dehydrogenase (337 aa).

Residues 12 to 13, aspartate 34, and lysine 79 each bind NAD(+); that span reads RI. D-glyceraldehyde 3-phosphate is bound by residues 150-152, threonine 181, 210-211, and arginine 233; these read SCT and TG. The active-site Nucleophile is the cysteine 151. Residue asparagine 315 participates in NAD(+) binding.

Belongs to the glyceraldehyde-3-phosphate dehydrogenase family. Homotetramer.

It localises to the cytoplasm. It carries out the reaction D-glyceraldehyde 3-phosphate + phosphate + NAD(+) = (2R)-3-phospho-glyceroyl phosphate + NADH + H(+). It functions in the pathway carbohydrate degradation; glycolysis; pyruvate from D-glyceraldehyde 3-phosphate: step 1/5. The protein is Glyceraldehyde-3-phosphate dehydrogenase (GPD1) of Cochliobolus heterostrophus (Southern corn leaf blight fungus).